Consider the following 495-residue polypeptide: Adenosylhomocysteinase (495 aa).

Substrate contacts are provided by Thr-71, Asp-156, and Glu-218. NAD(+) is bound at residue 219-221 (TTT). Substrate contacts are provided by Lys-248 and Asp-252. Residues Asn-253, 282 to 287 (GYGDVG), Glu-305, Asn-340, 361 to 363 (IGH), and Asn-409 contribute to the NAD(+) site.

This sequence belongs to the adenosylhomocysteinase family. NAD(+) is required as a cofactor.

Its subcellular location is the cytoplasm. The catalysed reaction is S-adenosyl-L-homocysteine + H2O = L-homocysteine + adenosine. It participates in amino-acid biosynthesis; L-homocysteine biosynthesis; L-homocysteine from S-adenosyl-L-homocysteine: step 1/1. Its function is as follows. May play a key role in the regulation of the intracellular concentration of adenosylhomocysteine. This is Adenosylhomocysteinase from Mycobacterium bovis (strain ATCC BAA-935 / AF2122/97).